The primary structure comprises 389 residues: Oxysterol-binding protein 1 (389 aa).

2 coiled-coil regions span residues 1–31 (MGKK…NKPA) and 340–371 (KDDV…DEWK). The segment at 1–43 (MGKKDKNVSVEEEVDEAEIEKLAAENANKPAPQLTKEDLDAMD) is disordered.

Belongs to the OSBP family. In terms of assembly, interacts with dstC.

It is found in the cytoplasm. Functionally, may play a role in the regulation of the slug-fruiting body switch. This is Oxysterol-binding protein 1 (osbA) from Dictyostelium discoideum (Social amoeba).